The sequence spans 275 residues: Multivesicular body subunit 12A (275 aa).

The MABP domain maps to 5-145 (STPITGLAWI…GLVFWCRKGS (141 aa)). The SH3-binding motif lies at 151–156 (PTPKPR). A UMA domain is found at 216–267 (IDGIPFTIHPMFENTINNSSVAASDFRDLHIKTLSEIESEYNYGFVVEKTAA).

The protein belongs to the MVB12 family. In terms of assembly, component of the ESCRT-I complex (endosomal sorting complex required for transport I).

It is found in the cytoplasm. It localises to the endosome. Its subcellular location is the late endosome membrane. In terms of biological role, component of the ESCRT-I complex, a regulator of vesicular trafficking process. Required for the sorting of endocytic ubiquitinated cargos into multivesicular bodies. The protein is Multivesicular body subunit 12A (mvb12a) of Xenopus laevis (African clawed frog).